The chain runs to 220 residues: MNYLFVFLALSAAVTFANAECNKIQCRMFCKFGFQQDENGCDICKCAERPEKKCSNRYCKMLCPEGFQVDANGCQICRCKRSALEAPEKKCDGLKQCKMHCENGFVRDENGCPKCECSKCKQFQCLIFCPHGNEVDENGCKTCKCKAAPEKKKCDDLKQCRMFCENGFVRDENGCKKCECNKCKNFICQIFCEYGNVVDENGCKTCKCNSKPLKLSLHCR.

The signal sequence occupies residues 1–19 (MNYLFVFLALSAAVTFANA). 6 consecutive Antistasin-like domains span residues 21-46 (CNKI…ICKC), 54-79 (CSNR…ICRC), 91-117 (CDGL…KCEC), 120-145 (CKQF…TCKC), 154-180 (CDDL…KCEC), and 183-208 (CKNF…TCKC).

It belongs to the protease inhibitor I15 (antistasin) family. In terms of tissue distribution, gland cells. It is more strongly expressed in the head than in the gastric tissue.

The protein localises to the secreted. In terms of biological role, this highly disulfide-bonded protein is a potent inhibitor of factor Xa. Facilitates digestion of tissues and may also protect the gastric tissues from its own digestive enzymes. May have therapeutic utility as an anticoagulant. Also exhibits a strong metastatic activity. The sequence is that of Antistasin from Hydra vulgaris (Hydra).